Consider the following 142-residue polypeptide: Metallothiol transferase FosB (142 aa).

The region spanning 5 to 120 is the VOC domain; that stretch reads SVNHICFSVS…DGHKIELHTG (116 aa). Residues His8, His67, and Glu116 each coordinate Mg(2+). Catalysis depends on Glu116, which acts as the Proton donor/acceptor.

It belongs to the fosfomycin resistance protein family. FosB subfamily. As to quaternary structure, homodimer. Mg(2+) serves as cofactor.

Its subcellular location is the cytoplasm. Its function is as follows. Metallothiol transferase which confers resistance to fosfomycin by catalyzing the addition of a thiol cofactor to fosfomycin. L-cysteine is probably the physiological thiol donor. This chain is Metallothiol transferase FosB, found in Staphylococcus epidermidis (strain ATCC 12228 / FDA PCI 1200).